The following is a 248-amino-acid chain: UDP-2,3-diacylglucosamine hydrolase (248 aa).

Residues D7, H9, D40, N78, and H113 each contribute to the Mn(2+) site. 78-79 contributes to the substrate binding site; sequence NR. The substrate site is built by D121, S159, T163, K166, and H194. 2 residues coordinate Mn(2+): H194 and H196.

It belongs to the LpxH family. The cofactor is Mn(2+).

Its subcellular location is the cell inner membrane. The enzyme catalyses UDP-2-N,3-O-bis[(3R)-3-hydroxytetradecanoyl]-alpha-D-glucosamine + H2O = 2-N,3-O-bis[(3R)-3-hydroxytetradecanoyl]-alpha-D-glucosaminyl 1-phosphate + UMP + 2 H(+). The protein operates within glycolipid biosynthesis; lipid IV(A) biosynthesis; lipid IV(A) from (3R)-3-hydroxytetradecanoyl-[acyl-carrier-protein] and UDP-N-acetyl-alpha-D-glucosamine: step 4/6. In terms of biological role, hydrolyzes the pyrophosphate bond of UDP-2,3-diacylglucosamine to yield 2,3-diacylglucosamine 1-phosphate (lipid X) and UMP by catalyzing the attack of water at the alpha-P atom. Involved in the biosynthesis of lipid A, a phosphorylated glycolipid that anchors the lipopolysaccharide to the outer membrane of the cell. The protein is UDP-2,3-diacylglucosamine hydrolase of Pseudomonas savastanoi pv. phaseolicola (strain 1448A / Race 6) (Pseudomonas syringae pv. phaseolicola (strain 1448A / Race 6)).